The primary structure comprises 186 residues: Protein GrpE (186 aa).

A compositionally biased stretch (polar residues) spans 1 to 15 (MADEQQTLDQQTPEQ). The tract at residues 1 to 20 (MADEQQTLDQQTPEQPTGAA) is disordered.

It belongs to the GrpE family. Homodimer.

The protein localises to the cytoplasm. Participates actively in the response to hyperosmotic and heat shock by preventing the aggregation of stress-denatured proteins, in association with DnaK and GrpE. It is the nucleotide exchange factor for DnaK and may function as a thermosensor. Unfolded proteins bind initially to DnaJ; upon interaction with the DnaJ-bound protein, DnaK hydrolyzes its bound ATP, resulting in the formation of a stable complex. GrpE releases ADP from DnaK; ATP binding to DnaK triggers the release of the substrate protein, thus completing the reaction cycle. Several rounds of ATP-dependent interactions between DnaJ, DnaK and GrpE are required for fully efficient folding. The chain is Protein GrpE from Pseudomonas aeruginosa (strain UCBPP-PA14).